The chain runs to 192 residues: Large ribosomal subunit protein uL3 (192 aa).

It belongs to the universal ribosomal protein uL3 family. Part of the 50S ribosomal subunit. Forms a cluster with proteins L14 and L19.

Its function is as follows. One of the primary rRNA binding proteins, it binds directly near the 3'-end of the 23S rRNA, where it nucleates assembly of the 50S subunit. The polypeptide is Large ribosomal subunit protein uL3 (rplC) (Wolinella succinogenes (strain ATCC 29543 / DSM 1740 / CCUG 13145 / JCM 31913 / LMG 7466 / NCTC 11488 / FDC 602W) (Vibrio succinogenes)).